We begin with the raw amino-acid sequence, 78 residues long: Conotoxin CaFr179 (78 aa).

The signal sequence occupies residues M1–A19. The propeptide occupies S20–A44. Cystine bridges form between C52/C64, C56/C72, and C63/C76. The residue at position 77 (F77) is a Phenylalanine amide.

The protein belongs to the conotoxin O3 superfamily. Expressed by the venom duct.

The protein localises to the secreted. This chain is Conotoxin CaFr179, found in Conus caracteristicus (Characteristic cone).